Reading from the N-terminus, the 454-residue chain is 5-hydroxytryptamine receptor 3D (454 aa).

A signal peptide spans 1-24 (MQKHSPGPPALALLSQSLLTTGNG). The Extracellular portion of the chain corresponds to 25–232 (DTLIINCPGF…IRRRCRPSPY (208 aa)). An N-linked (GlcNAc...) asparagine glycan is attached at N66. Residues 233-253 (VVNFLVPSGILIAIDALSFYL) form a helical membrane-spanning segment. The Cytoplasmic segment spans residues 254–264 (PLESGNCAPFK). Residues 265-285 (MTVLLGYSVFLLMMNDLLPAT) traverse the membrane as a helical segment. Topologically, residues 286–306 (STSSHASLVAPLALMQTPLPA) are extracellular. A helical membrane pass occupies residues 307 to 327 (GVYFALCLSLMVGSLLETIFI). The Cytoplasmic segment spans residues 328 to 431 (THLLHVATTQ…WVQFSHAMDA (104 aa)). The tract at residues 363 to 410 (PQKGNKGPGLTPTHLPGVKEPEVSAGQMPGPGEAELTGGSEWTRAQRE) is disordered. The interval 399 to 430 (TGGSEWTRAQREHEAQKQHSVELWVQFSHAMD) is HA-stretch; determines single-channel conductance in 5-HT3 receptors. The helical transmembrane segment at 432-452 (LLFRLYLLFMASSIITVICLW) threads the bilayer. Residues 453–454 (NT) are Extracellular-facing.

Belongs to the ligand-gated ion channel (TC 1.A.9) family. 5-hydroxytryptamine receptor (TC 1.A.9.2) subfamily. HTR3D sub-subfamily. In terms of assembly, forms homopentameric as well as heteropentameric serotonin-activated cation-selective channel complexes with HTR3A. The homomeric complex is not functional. Heteropentameric complexes display properties which resemble that of neuronal serotonin-activated channels in vivo. As to expression, expressed in liver, as well as fetal and adult colon and kidney.

The protein localises to the postsynaptic cell membrane. Its subcellular location is the cell membrane. It catalyses the reaction Na(+)(in) = Na(+)(out). The catalysed reaction is K(+)(in) = K(+)(out). The enzyme catalyses Ca(2+)(in) = Ca(2+)(out). Forms serotonin (5-hydroxytryptamine/5-HT3)-activated cation-selective channel complexes, which when activated cause fast, depolarizing responses in neurons. This Homo sapiens (Human) protein is 5-hydroxytryptamine receptor 3D.